The sequence spans 840 residues: Wings apart-like protein 2 (840 aa).

Disordered regions lie at residues 1–37 (MMER…EPVD), 56–78 (SDND…FGSN), and 532–594 (FDLE…DHHV). Over residues 546-557 (KQKKSKGQKRKG) the composition is skewed to basic residues. The segment covering 558-567 (SYRDKKDERS) has biased composition (basic and acidic residues). A compositionally biased stretch (polar residues) spans 569–585 (QLFSSQEESNHGLNSQE). The WAPL domain occupies 764 to 819 (KEAEKMIVEAYSALLLAFLSTESRSIRNAIRDYLPKRDMAILVPVLDRFVAFHTTL).

It belongs to the WAPL family. Interacts with the cohesin complex throughout the cell cycle. In terms of tissue distribution, expressed in roots, leaves, buds and siliques.

It is found in the nucleus. The protein resides in the chromosome. Regulator of sister chromatid cohesion in meiosis which negatively regulates cohesin association with chromatin, acting as an antagonist of CTF7. Cohesion ensures that chromosome partitioning is accurate in both meiotic and mitotic cells and plays an important role in DNA repair. Essential for the prophase removal of cohesin during meiosis thus determining the timely release of meiotic cohesion. Important for proper spindle attachment and assembly during meiosis. Helps to prevent abnormal centromere association during prophase I in meiocytes. Required for early embryonic patterning. Also involved in chromosome segregation during mitosis. In Arabidopsis thaliana (Mouse-ear cress), this protein is Wings apart-like protein 2.